A 489-amino-acid polypeptide reads, in one-letter code: Argininosuccinate lyase (489 aa).

Positions 1–20 (MSEPSAAVGQRPGGESAPAH) are disordered.

This sequence belongs to the lyase 1 family. Argininosuccinate lyase subfamily.

It is found in the cytoplasm. It carries out the reaction 2-(N(omega)-L-arginino)succinate = fumarate + L-arginine. It functions in the pathway amino-acid biosynthesis; L-arginine biosynthesis; L-arginine from L-ornithine and carbamoyl phosphate: step 3/3. The sequence is that of Argininosuccinate lyase from Acidothermus cellulolyticus (strain ATCC 43068 / DSM 8971 / 11B).